The primary structure comprises 274 residues: Acyl-coenzyme A diphosphatase YFT2 (274 aa).

Residues 1–11 (MIRQLNYWSRK) are Cytoplasmic-facing. The helical transmembrane segment at 12–32 (AYLIYPFQVFVGALLSIVVSS) threads the bilayer. The Lumenal portion of the chain corresponds to 33–60 (ETLNHQKETCALLKSSNIFNVIFAYKAN). The helical transmembrane segment at 61–81 (QLWPFLFFSLAFLQIYFHYLA) threads the bilayer. Topologically, residues 82-124 (RMDILPLPISSTETSSSYLTYTNHWPLLKNRIISIMITQYACK) are cytoplasmic. Residues 125 to 145 (FVLKYLLLFLNFQFIDHVFIW) form a helical membrane-spanning segment. Residues 146-170 (TGGECSSGSKTTSAEKCRLENGKWD) lie on the Lumenal side of the membrane. Residues 171–191 (GGFDISGHFCFLVSISMILWM) traverse the membrane as a helical segment. H178 is an active-site residue. Residues 192–215 (ELHLFSRFVQAEDMFWVVNKWVRA) lie on the Cytoplasmic side of the membrane. A helical membrane pass occupies residues 216-236 (CLAIVCAVLVIWICILWVTAI). Topologically, residues 237-247 (YYHTILEKVLG) are lumenal. H239 is an active-site residue. Residues 248–268 (CLMGFICPVFIYHILPKIGIL) form a helical membrane-spanning segment. The Cytoplasmic segment spans residues 269–274 (HNYLYL).

Belongs to the FIT family. Yeast FIT2A/YFT2 subfamily.

It is found in the endoplasmic reticulum membrane. Its subcellular location is the vacuole. The catalysed reaction is an acyl-CoA + H2O = an acyl-4'-phosphopantetheine + adenosine 3',5'-bisphosphate + 2 H(+). It carries out the reaction (9Z)-octadecenoyl-CoA + H2O = S-(9Z-octadecenoyl)-4'-phosphopantetheine + adenosine 3',5'-bisphosphate + 2 H(+). It catalyses the reaction (5Z,8Z,11Z,14Z)-eicosatetraenoyl-CoA + H2O = S-(5Z,8Z,11Z,14Z-eicosatetraenoyl)-4'-phosphopantetheine + adenosine 3',5'-bisphosphate + 2 H(+). The enzyme catalyses hexadecanoyl-CoA + H2O = S-hexadecanoyl-4'-phosphopantetheine + adenosine 3',5'-bisphosphate + 2 H(+). Its function is as follows. Fatty acyl-coenzyme A (CoA) diphosphatase that hydrolyzes fatty acyl-CoA to yield acyl-4'-phosphopantetheine and adenosine 3',5'-bisphosphate. Preferentially hydrolyzes unsaturated long-chain acyl-CoA substrates in the endoplasmic reticulum (ER) lumen. This catalytic activity is required for maintaining ER structure and for lipid droplets (LDs) biogenesis, which are lipid storage organelles involved in maintaining lipid and energy homeostasis. May directly bind to diacylglycerol (DAGs) and triacylglycerol, which is also important for LD biogenesis. May support directional budding of nacent LDs from the ER into the cytosol by reducing DAG levels at sites of LD formation. May play a role in the regulation of cell morphology and cytoskeletal organization. Involved in phospholipid biosynthesis. The polypeptide is Acyl-coenzyme A diphosphatase YFT2 (Saccharomyces cerevisiae (strain ATCC 204508 / S288c) (Baker's yeast)).